The primary structure comprises 1727 residues: Nucleoporin alm1 (1727 aa).

7 coiled-coil regions span residues 57–361 (QEVN…KNTS), 443–463 (NFLS…QAEL), 542–740 (IKEA…AEEL), 804–1106 (AARK…INES), 1223–1427 (GERS…QLNK), 1497–1555 (NEEE…AESA), and 1601–1664 (QKEW…KKDS). Residues 1423–1448 (EQLNKPSATPTATTQSEPSTVSLEEF) are compositionally biased toward polar residues. Disordered stretches follow at residues 1423–1459 (EQLN…SSTQ), 1477–1500 (EKVR…NEEE), and 1656–1727 (LEQS…KKAK). 2 stretches are compositionally biased toward polar residues: residues 1672–1684 (ASKN…SNSE) and 1702–1714 (VDTN…SSSD). Serine 1706 bears the Phosphoserine mark.

The protein resides in the nucleus. The protein localises to the nuclear pore complex. It is found in the nucleus envelope. Maintains the proteasome and its anchor cut8 at the nucleus envelope and is required for kinetochore component proteostasis. Proper kinetochore stoichiometry ensures the correct attachment of kinetochores to spindle microtubules during cytokinesis. Required for the localization of spindle assembly checkpoint (SAC) protein mad2 and bub1 to the nucleus envelope during interphase, but not their localization during mitosis. The chain is Nucleoporin alm1 from Schizosaccharomyces pombe (strain 972 / ATCC 24843) (Fission yeast).